We begin with the raw amino-acid sequence, 430 residues long: Functional amyloid transporter FapF (430 aa).

Residues 1 to 24 form the signal peptide; it reads MHRSLSLRAVVCLSTLLPASLLYA. Topologically, residues 25-131 are periplasmic; it reads APDVDIETLK…EASGFFGNGK (107 aa). Positions 29-64 form a coiled coil; it reads DIETLKQELLELKQRYEAQQKALAVLEQRVRQVEDQ. The disordered stretch occupies residues 62–114; the sequence is EDQPATPAPKRLAKSPADFKQSGSTVAASSGTGGATGGSSYGQSLKDDSEPAQ. The span at 92–101 shows a compositional bias: gly residues; that stretch reads GTGGATGGSS. Residues 113–125 form an alpha helical plug region; it reads AQSVSNLYNEASG. Residues 132-142 form a beta stranded membrane-spanning segment; the sequence is FSFETGITYAR. Topologically, residues 143–172 are extracellular; that stretch reads YDARQLTLNGFLALDSIFLGNINLDRIKAD. A beta stranded membrane pass occupies residues 173–183; it reads NWTLDLTGRYN. Over 184-189 the chain is Periplasmic; sequence LDNRWQ. The chain crosses the membrane as a beta stranded span at residues 190 to 198; sequence FDVNVPVVY. The Extracellular portion of the chain corresponds to 199-224; that stretch reads RESTYQSGGASGGDPQATSEESVSRD. Positions 203–223 are disordered; it reads YQSGGASGGDPQATSEESVSR. Residues 225–238 traverse the membrane as a beta stranded segment; it reads PTIGDVNFGIAYKF. The Periplasmic segment spans residues 239–246; it reads LDESATMP. The beta stranded transmembrane segment at 247–256 threads the bilayer; that stretch reads DAVVSVRVKA. At 257–288 the chain is on the extracellular side; it reads PTGKEPFGIKLVRSTANDNLYVPESLPTGNGV. A beta stranded transmembrane segment spans residues 289 to 298; it reads WSITPGLSLV. Residues 299–304 lie on the Periplasmic side of the membrane; it reads KTFDPA. The chain crosses the membrane as a beta stranded span at residues 305-314; that stretch reads VLFGSVSYTH. The Extracellular segment spans residues 315–339; it reads NLEDSFDDISSDVNQKVGGKVRLGD. A beta stranded membrane pass occupies residues 340 to 348; that stretch reads SFQFGVGVA. At 349-356 the chain is on the periplasmic side; it reads FALNERMS. The beta stranded transmembrane segment at 357 to 365 threads the bilayer; sequence MSFSVSDLI. At 366 to 386 the chain is on the extracellular side; that stretch reads QRKSKLKPDGGGWQSIVSSDA. A beta stranded transmembrane segment spans residues 387-397; sequence NAGYFNVGMTI. Residues 398-404 lie on the Periplasmic side of the membrane; that stretch reads AASENLT. Residues 405–412 form a beta stranded membrane-spanning segment; sequence IVPNLAIG. The Extracellular portion of the chain corresponds to 413–419; the sequence is MTDDAPD. A beta stranded transmembrane segment spans residues 420–428; the sequence is FTFSLKFPY. Over 429-430 the chain is Periplasmic; sequence YF.

This sequence belongs to the amyloid transporter (TC 9.B.153) family. As to quaternary structure, homotrimer.

The protein localises to the cell outer membrane. In terms of biological role, transports fibril components across the outer membrane. Upon overexpression of the endogenous six-gene locus (fapA-fapF) in situ cells form large clumps during liquid growth, make large amounts of biofilm and produce amyloid fibrils. Expression of the 6 gene operon in E.coli strain BL21(DE3) induces flocculation and biofilm formation with copious extracellular fibrils. This chain is Functional amyloid transporter FapF, found in Pseudomonas fluorescens.